We begin with the raw amino-acid sequence, 102 residues long: Small ribosomal subunit protein eS24 (102 aa).

Belongs to the eukaryotic ribosomal protein eS24 family.

The chain is Small ribosomal subunit protein eS24 from Methanococcus maripaludis (strain DSM 14266 / JCM 13030 / NBRC 101832 / S2 / LL).